Here is a 352-residue protein sequence, read N- to C-terminus: B1 bradykinin receptor (352 aa).

Topologically, residues 1–41 are extracellular; sequence MAAQTLLELQPSNQSQLSALNTTSCDNAREAWDLLYQVLPI. 2 N-linked (GlcNAc...) asparagine glycosylation sites follow: Asn13 and Asn21. Residues 42 to 62 traverse the membrane as a helical segment; that stretch reads FILTICAFGLLGNLFVLSVFL. At 63–72 the chain is on the cytoplasmic side; sequence LLRRRLTVAE. Residues 73–93 traverse the membrane as a helical segment; the sequence is IYLVNLAASDLVFVLGLPFWA. Over 94 to 110 the chain is Extracellular; that stretch reads QNIWNQFNWPFGDLLCR. Cys109 and Cys188 are oxidised to a cystine. A helical transmembrane segment spans residues 111 to 131; the sequence is VVNGVIKANLFISIFLMVAIS. Residues 132 to 153 lie on the Cytoplasmic side of the membrane; it reads QDRYCVLVHPMASRRRRRRRRA. The helical transmembrane segment at 154 to 174 threads the bilayer; the sequence is RATCMVIWAVGALLSTPTFLL. Residues 175-206 are Extracellular-facing; sequence RSVSAVQDLNISACILLLPHQAWHVARIVELN. A glycan (N-linked (GlcNAc...) asparagine) is linked at Asn184. A helical transmembrane segment spans residues 207–227; it reads VLGFLLPLAAIIFFNGHILAS. The Cytoplasmic segment spans residues 228-250; it reads LRGQGEVSQTRIGGPKDCKTTVL. A helical transmembrane segment spans residues 251–271; the sequence is ILTLVAAFLVCWAPYHCFAFL. At 272 to 294 the chain is on the extracellular side; sequence EFLFQVRAVRGCFWEDFIDLGLQ. The chain crosses the membrane as a helical span at residues 295 to 315; it reads LANFFAFTNSCLNPVIYVFVG. Residues 316 to 326 lie on the Cytoplasmic side of the membrane; it reads RLFRTKVWELY. Residue Cys329 is the site of S-palmitoyl cysteine attachment.

Belongs to the G-protein coupled receptor 1 family. Bradykinin receptor subfamily. BDKRB1 sub-subfamily.

Its subcellular location is the cell membrane. In terms of biological role, this is a receptor for bradykinin. Could be a factor in chronic pain and inflammation. In Tupaia minor (Pigmy tree shrew), this protein is B1 bradykinin receptor (BDKRB1).